The sequence spans 294 residues: HTH-type transcriptional regulator DgdR (294 aa).

In terms of domain architecture, HTH lysR-type spans 14 to 70 (LEIDLLRSFVVIAEVRALSRAAARVGRTQSALSQQMKRLEDIVDQPLFQRTGRGVVL). The H-T-H motif DNA-binding region spans 31-50 (LSRAAARVGRTQSALSQQMK).

Belongs to the LysR transcriptional regulatory family.

In Burkholderia cepacia (Pseudomonas cepacia), this protein is HTH-type transcriptional regulator DgdR (dgdR).